The sequence spans 588 residues: ATP-dependent lipid A-core flippase (588 aa).

A run of 6 helical transmembrane segments spans residues 23–43 (FWPV…IDAG), 56–76 (FITI…IGIT), 141–161 (DALT…TVMM), 162–182 (VICW…GIIV), 257–277 (LVIA…STVI), and 278–298 (TISA…IKPM). In terms of domain architecture, ABC transmembrane type-1 spans 28–310 (LLGVLANILY…LTTLNATIQR (283 aa)). The ABC transporter domain occupies 342 to 576 (IEFKHVYHAY…DGHYAQLYKV (235 aa)). Position 375-382 (375-382 (GHSGSGKT)) interacts with ATP.

This sequence belongs to the ABC transporter superfamily. Lipid exporter (TC 3.A.1.106) family. In terms of assembly, homodimer.

It localises to the cell inner membrane. It carries out the reaction ATP + H2O + lipid A-core oligosaccharideSide 1 = ADP + phosphate + lipid A-core oligosaccharideSide 2.. In terms of biological role, involved in lipopolysaccharide (LPS) biosynthesis. Translocates lipid A-core from the inner to the outer leaflet of the inner membrane. Transmembrane domains (TMD) form a pore in the inner membrane and the ATP-binding domain (NBD) is responsible for energy generation. The chain is ATP-dependent lipid A-core flippase from Legionella pneumophila subsp. pneumophila (strain Philadelphia 1 / ATCC 33152 / DSM 7513).